The primary structure comprises 260 residues: Large ribosomal subunit protein uL2 (260 aa).

The interval 208–230 is disordered; it reads EHPHGGGNHQHIGHPSTVRRDAS.

The protein belongs to the universal ribosomal protein uL2 family.

The protein localises to the cytoplasm. The chain is Large ribosomal subunit protein uL2 from Caenorhabditis elegans.